The primary structure comprises 400 residues: Delta(12) fatty acid desaturase (400 aa).

Residues 91–111 (LAWPAYWIMQGIVCTGIWVLA) traverse the membrane as a helical segment. A Histidine box-1 motif is present at residues 112–116 (HECGH). The Histidine box-2 signature appears at 148–152 (HSKHH). Transmembrane regions (helical) follow at residues 199-219 (IVTL…YLIM), 245-265 (FFDI…LIYA), and 277-297 (YYII…FLQH). The Histidine box-3 signature appears at 339–343 (HVAHH).

This sequence belongs to the fatty acid desaturase type 1 family.

The protein localises to the membrane. It carries out the reaction (9Z)-octadecenoyl-CoA + 2 Fe(II)-[cytochrome b5] + O2 + 2 H(+) = (9Z,12Z)-octadecadienoyl-CoA + 2 Fe(III)-[cytochrome b5] + 2 H2O. It catalyses the reaction (9Z)-hexadecenoyl-CoA + 2 Fe(II)-[cytochrome b5] + O2 + 2 H(+) = (9Z,12Z)-hexadecadienoyl-CoA + 2 Fe(III)-[cytochrome b5] + 2 H2O. The protein operates within lipid metabolism; polyunsaturated fatty acid biosynthesis. Its function is as follows. Catalyzes the desaturation of oleic acid (Delta(9)-18:1) to linoleic acid (Delta(9), Delta(12)-18:2). The sequence is that of Delta(12) fatty acid desaturase from Mortierella isabellina (Filamentous fungus).